The chain runs to 347 residues: Probable dual-specificity RNA methyltransferase RlmN (347 aa).

Glu-93 functions as the Proton acceptor in the catalytic mechanism. One can recognise a Radical SAM core domain in the interval 100–323 (KAKRKTACVS…KKAGLNISTR (224 aa)). Cys-107 and Cys-334 are joined by a disulfide. Cys-114, Cys-118, and Cys-121 together coordinate [4Fe-4S] cluster. S-adenosyl-L-methionine contacts are provided by residues 160–161 (GE), Ser-192, 215–217 (SLT), and Asn-291. The active-site S-methylcysteine intermediate is Cys-334.

Belongs to the radical SAM superfamily. RlmN family. [4Fe-4S] cluster is required as a cofactor.

The protein resides in the cytoplasm. The catalysed reaction is adenosine(2503) in 23S rRNA + 2 reduced [2Fe-2S]-[ferredoxin] + 2 S-adenosyl-L-methionine = 2-methyladenosine(2503) in 23S rRNA + 5'-deoxyadenosine + L-methionine + 2 oxidized [2Fe-2S]-[ferredoxin] + S-adenosyl-L-homocysteine. It catalyses the reaction adenosine(37) in tRNA + 2 reduced [2Fe-2S]-[ferredoxin] + 2 S-adenosyl-L-methionine = 2-methyladenosine(37) in tRNA + 5'-deoxyadenosine + L-methionine + 2 oxidized [2Fe-2S]-[ferredoxin] + S-adenosyl-L-homocysteine. Functionally, specifically methylates position 2 of adenine 2503 in 23S rRNA and position 2 of adenine 37 in tRNAs. The protein is Probable dual-specificity RNA methyltransferase RlmN of Treponema denticola (strain ATCC 35405 / DSM 14222 / CIP 103919 / JCM 8153 / KCTC 15104).